The primary structure comprises 112 residues: Putative transmembrane protein ORF112 (112 aa).

The next 3 helical transmembrane spans lie at 26–46, 50–70, and 80–100; these read FWEV…GILV, ILVT…MYLF, and IFFP…LVGV.

It localises to the host membrane. In Acidianus convivator (ABV), this protein is Putative transmembrane protein ORF112.